A 448-amino-acid polypeptide reads, in one-letter code: Exodeoxyribonuclease 7 large subunit (448 aa).

Belongs to the XseA family. In terms of assembly, heterooligomer composed of large and small subunits.

Its subcellular location is the cytoplasm. The enzyme catalyses Exonucleolytic cleavage in either 5'- to 3'- or 3'- to 5'-direction to yield nucleoside 5'-phosphates.. Functionally, bidirectionally degrades single-stranded DNA into large acid-insoluble oligonucleotides, which are then degraded further into small acid-soluble oligonucleotides. This chain is Exodeoxyribonuclease 7 large subunit, found in Shewanella sp. (strain ANA-3).